We begin with the raw amino-acid sequence, 498 residues long: ATP synthase subunit beta, chloroplastic (498 aa).

Thr6 bears the Phosphothreonine mark. Ser13 bears the Phosphoserine mark. Gly172 to Thr179 lines the ATP pocket.

The protein belongs to the ATPase alpha/beta chains family. As to quaternary structure, F-type ATPases have 2 components, CF(1) - the catalytic core - and CF(0) - the membrane proton channel. CF(1) has five subunits: alpha(3), beta(3), gamma(1), delta(1), epsilon(1). CF(0) has four main subunits: a(1), b(1), b'(1) and c(9-12).

It is found in the plastid. Its subcellular location is the chloroplast thylakoid membrane. It catalyses the reaction ATP + H2O + 4 H(+)(in) = ADP + phosphate + 5 H(+)(out). In terms of biological role, produces ATP from ADP in the presence of a proton gradient across the membrane. The catalytic sites are hosted primarily by the beta subunits. This is ATP synthase subunit beta, chloroplastic from Olimarabidopsis pumila (Dwarf rocket).